Here is a 230-residue protein sequence, read N- to C-terminus: Ribonuclease 3 (230 aa).

The region spanning 5–134 (EALLENSFNI…FLGALLLDKG (130 aa)) is the RNase III domain. Glu-47 provides a ligand contact to Mg(2+). Asp-51 is an active-site residue. Residues Asp-120 and Glu-123 each coordinate Mg(2+). Glu-123 is an active-site residue. In terms of domain architecture, DRBM spans 160 to 229 (DYKTCLQELL…AKNALAQLSE (70 aa)).

The protein belongs to the ribonuclease III family. Homodimer. Mg(2+) is required as a cofactor.

It localises to the cytoplasm. It carries out the reaction Endonucleolytic cleavage to 5'-phosphomonoester.. Functionally, digests double-stranded RNA. Involved in the processing of primary rRNA transcript to yield the immediate precursors to the large and small rRNAs (23S and 16S). Processes some mRNAs, and tRNAs when they are encoded in the rRNA operon. Processes pre-crRNA and tracrRNA of type II CRISPR loci if present in the organism. The chain is Ribonuclease 3 from Streptococcus equi subsp. zooepidemicus (strain H70).